The primary structure comprises 324 residues: tRNA N6-adenosine threonylcarbamoyltransferase (324 aa).

The Fe cation site is built by His107, His111, and Tyr127. Residues 127 to 131 (YVSGG), Asp159, Gly172, Glu176, and Asn257 contribute to the substrate site. Position 285 (Asp285) interacts with Fe cation.

The protein belongs to the KAE1 / TsaD family. As to quaternary structure, monomer. Component of the KEOPS complex that consists of Kae1, Bud32, Cgi121 and Pcc1; the whole complex dimerizes. The cofactor is Fe(2+).

It is found in the cytoplasm. The catalysed reaction is L-threonylcarbamoyladenylate + adenosine(37) in tRNA = N(6)-L-threonylcarbamoyladenosine(37) in tRNA + AMP + H(+). Functionally, required for the formation of a threonylcarbamoyl group on adenosine at position 37 (t(6)A37) in tRNAs that read codons beginning with adenine. Is a component of the KEOPS complex that is probably involved in the transfer of the threonylcarbamoyl moiety of threonylcarbamoyl-AMP (TC-AMP) to the N6 group of A37. Kae1 likely plays a direct catalytic role in this reaction, but requires other protein(s) of the complex to fulfill this activity. This chain is tRNA N6-adenosine threonylcarbamoyltransferase, found in Thermococcus sibiricus (strain DSM 12597 / MM 739).